The chain runs to 199 residues: Recombination protein RecR (199 aa).

A C4-type zinc finger spans residues 58–73 (CKKCFNLTSEEECDIC). Residues 81–175 (NIICVVAETK…KVTRIAYGLP (95 aa)) form the Toprim domain.

Belongs to the RecR family.

In terms of biological role, may play a role in DNA repair. It seems to be involved in an RecBC-independent recombinational process of DNA repair. It may act with RecF and RecO. This Prochlorococcus marinus (strain MIT 9515) protein is Recombination protein RecR.